The following is a 447-amino-acid chain: N-succinylarginine dihydrolase (447 aa).

Substrate-binding positions include 19–28 (AGLSFGNEAS), asparagine 110, and 137–138 (HR). Glutamate 174 is a catalytic residue. Arginine 213 is a binding site for substrate. Histidine 249 is an active-site residue. Residues aspartate 251 and asparagine 364 each contribute to the substrate site. Cysteine 370 (nucleophile) is an active-site residue.

This sequence belongs to the succinylarginine dihydrolase family. Homodimer.

It catalyses the reaction N(2)-succinyl-L-arginine + 2 H2O + 2 H(+) = N(2)-succinyl-L-ornithine + 2 NH4(+) + CO2. The protein operates within amino-acid degradation; L-arginine degradation via AST pathway; L-glutamate and succinate from L-arginine: step 2/5. Functionally, catalyzes the hydrolysis of N(2)-succinylarginine into N(2)-succinylornithine, ammonia and CO(2). This chain is N-succinylarginine dihydrolase, found in Yersinia pestis bv. Antiqua (strain Antiqua).